A 4351-amino-acid polypeptide reads, in one-letter code: Protocadherin Fat 2 (4351 aa).

The N-terminal stretch at 1 to 18 (MTLVLLGVAMVLLHRAAC) is a signal peptide. Over 19-4050 (EKPLEETITP…IKRGDWGQQE (4032 aa)) the chain is Extracellular. 2 Cadherin domains span residues 34-148 (THSL…KPLF) and 149-256 (SPPS…PPVI). N-linked (GlcNAc...) asparagine glycosylation is found at Asn39, Asn210, Asn280, and Asn330. Cadherin domains are found at residues 363–458 (EKAV…APVF), 459–564 (NRSS…QPMF), 565–669 (EEVN…VPVQ), 716–820 (DHFP…PPRF), 821–925 (PPGG…PPQC), 926–1032 (ITEH…SPHF), 1033–1142 (SSFV…RPVF), 1138–1242 (SRPV…SPMF), 1243–1346 (SHKL…SSIP), 1350–1448 (DESH…RPQF), 1449–1555 (LQDH…SPHF), 1556–1660 (TQPR…APIF), 1661–1758 (SKDE…APAF), 1759–1872 (LKST…PPRF), 1873–1968 (SEQI…SLQF), 1969–2070 (DQDI…IPEF), 2071–2171 (QHLP…NPLF), 2172–2272 (QSPY…PPTF), 2273–2379 (SQLV…PPEF), 2380–2481 (REPQ…SPEF), 2482–2585 (QQNV…APQF), 2586–2692 (KASG…LPKF), 2693–2799 (SEPL…RPVF), 2800–2908 (EADP…PPRF), 2909–3013 (ASED…SPQC), 3014–3115 (SQLL…APRF), 3116–3220 (FPSH…LPIF), 3221–3323 (LNSE…HPRF), 3324–3428 (THDL…PPRF), 3429–3533 (FQLN…PPST), and 3534–3631 (LPLE…APQQ). N-linked (GlcNAc...) asparagine glycans are attached at residues Asn459, Asn568, Asn627, and Asn789. Asn996 carries N-linked (GlcNAc...) asparagine glycosylation. N-linked (GlcNAc...) asparagine glycans are attached at residues Asn1175, Asn1276, and Asn1417. Residues Asn1899, Asn1998, Asn2007, Asn2102, Asn2165, Asn2183, Asn2325, Asn2368, Asn2387, Asn2430, Asn2470, Asn2547, and Asn2597 are each glycosylated (N-linked (GlcNAc...) asparagine). N-linked (GlcNAc...) asparagine glycans are attached at residues Asn3127, Asn3278, and Asn3312. Asn3432, Asn3603, Asn3770, Asn3774, Asn3815, Asn3842, Asn3875, and Asn3906 each carry an N-linked (GlcNAc...) asparagine glycan. Residues 3775–3946 (GTTWRFSGQS…YLETWALSQC (172 aa)) enclose the Laminin G-like domain. Disulfide bonds link Cys3914–Cys3946, Cys3953–Cys3964, Cys3958–Cys3974, and Cys3976–Cys3985. 2 consecutive EGF-like domains span residues 3949–3986 (PGTT…RNCE) and 3988–4024 (GREN…DRCE). A glycan (N-linked (GlcNAc...) asparagine) is linked at Asn3991. Intrachain disulfides connect Cys3992/Cys4003, Cys3997/Cys4012, and Cys4014/Cys4023. The helical transmembrane segment at 4051–4071 (FLVIIVALPLLIIATVGLLLY) threads the bilayer. Over 4072–4351 (CRRCKSHKPV…DYGSCEEVMF (280 aa)) the chain is Cytoplasmic. The disordered stretch occupies residues 4313-4340 (DCEVNGGPAPGRSQPRAPPNYEGSDMVE).

In terms of assembly, homodimer.

Its subcellular location is the cell membrane. It localises to the cell junction. The protein localises to the golgi apparatus. The protein resides in the trans-Golgi network. Functionally, involved in the regulation of cell migration. May be involved in mediating the organization of the parallel fibers of granule cells during cerebellar development. This is Protocadherin Fat 2 (Fat2) from Mus musculus (Mouse).